The primary structure comprises 219 residues: Guanylate kinase (219 aa).

The Guanylate kinase-like domain occupies Gly-15–Lys-194. Ser-22–Thr-29 serves as a coordination point for ATP.

Belongs to the guanylate kinase family.

It is found in the cytoplasm. The catalysed reaction is GMP + ATP = GDP + ADP. In terms of biological role, essential for recycling GMP and indirectly, cGMP. The polypeptide is Guanylate kinase (Nitrobacter hamburgensis (strain DSM 10229 / NCIMB 13809 / X14)).